The following is a 131-amino-acid chain: Bypass of stop codon protein 4 (131 aa).

This chain is Bypass of stop codon protein 4 (BSC4), found in Saccharomyces cerevisiae (strain ATCC 204508 / S288c) (Baker's yeast).